The following is a 571-amino-acid chain: Proline--tRNA ligase (571 aa).

The protein belongs to the class-II aminoacyl-tRNA synthetase family. ProS type 1 subfamily. Homodimer.

The protein localises to the cytoplasm. The enzyme catalyses tRNA(Pro) + L-proline + ATP = L-prolyl-tRNA(Pro) + AMP + diphosphate. Functionally, catalyzes the attachment of proline to tRNA(Pro) in a two-step reaction: proline is first activated by ATP to form Pro-AMP and then transferred to the acceptor end of tRNA(Pro). As ProRS can inadvertently accommodate and process non-cognate amino acids such as alanine and cysteine, to avoid such errors it has two additional distinct editing activities against alanine. One activity is designated as 'pretransfer' editing and involves the tRNA(Pro)-independent hydrolysis of activated Ala-AMP. The other activity is designated 'posttransfer' editing and involves deacylation of mischarged Ala-tRNA(Pro). The misacylated Cys-tRNA(Pro) is not edited by ProRS. This is Proline--tRNA ligase from Pseudomonas fluorescens (strain ATCC BAA-477 / NRRL B-23932 / Pf-5).